Reading from the N-terminus, the 448-residue chain is Tubulin beta chain (448 aa).

GTP is bound by residues Gln-11, Glu-69, Ser-138, Gly-142, Thr-143, Gly-144, Asn-204, and Asn-226. Position 69 (Glu-69) interacts with Mg(2+). Residues 426 to 448 (QDAGIDEEEEEYEEEAPVDEPLE) form a disordered region. Residues 429–448 (GIDEEEEEYEEEAPVDEPLE) are compositionally biased toward acidic residues.

The protein belongs to the tubulin family. In terms of assembly, dimer of alpha and beta chains. A typical microtubule is a hollow water-filled tube with an outer diameter of 25 nm and an inner diameter of 15 nM. Alpha-beta heterodimers associate head-to-tail to form protofilaments running lengthwise along the microtubule wall with the beta-tubulin subunit facing the microtubule plus end conferring a structural polarity. Microtubules usually have 13 protofilaments but different protofilament numbers can be found in some organisms and specialized cells. Mg(2+) serves as cofactor.

The protein localises to the cytoplasm. It localises to the cytoskeleton. In terms of biological role, tubulin is the major constituent of microtubules, a cylinder consisting of laterally associated linear protofilaments composed of alpha- and beta-tubulin heterodimers. Microtubules grow by the addition of GTP-tubulin dimers to the microtubule end, where a stabilizing cap forms. Below the cap, tubulin dimers are in GDP-bound state, owing to GTPase activity of alpha-tubulin. The chain is Tubulin beta chain (TUB2) from Epichloe coenophiala (Tall fescue endophyte fungus).